Consider the following 256-residue polypeptide: MATSLARISKRSITSAVSSNLIRRYFAAEAVAVATTETPKPKSQVTPSPDRVKWDYRGQRQIIPLGQWLPKVAVDAYVAPNVVLAGQVTVWDGSSVWNGAVLRGDLNKITVGFCSNVQERCVVHAAWSSPTGLPAQTLIDRYVTVGAYSLLRSCTIEPECIIGQHSILMEGSLVETRSILEAGSVLPPGRRIPSGELWGGNPARFIRTLTNEETLEIPKLAVAINHLSGDYFSEFLPYSTIYLEVEKFKKSLGIAI.

A mitochondrion-targeting transit peptide spans M1–V33. Residues R103–D105 and Q118–E119 contribute to the substrate site. H124 lines the Zn(2+) pocket. R152, Q164, and Y231 together coordinate substrate.

The protein belongs to the gamma-class carbonic anhydrase family. Component of the mitochondrial oxidoreductase respiratory chain complex I; element of the extra matrix-exposed domain, which is attached to the membrane arm of this complex. Interacts with GAMMACA2.

The protein localises to the mitochondrion membrane. Functionally, involved in complex I assembly in mitochondria and respiration. The chain is Gamma carbonic anhydrase-like 2, mitochondrial (GAMMACAL2) from Arabidopsis thaliana (Mouse-ear cress).